The following is a 246-amino-acid chain: 14-3-3 protein beta/alpha (246 aa).

N-acetylmethionine is present on methionine 1. Position 2 is an N-acetylthreonine; in 14-3-3 protein beta/alpha, N-terminally processed (threonine 2). The residue at position 2 (threonine 2) is a Phosphothreonine. Lysine 5 bears the N6-acetyllysine mark. At lysine 51 the chain carries N6-acetyllysine; alternate. A Glycyl lysine isopeptide (Lys-Gly) (interchain with G-Cter in SUMO2); alternate cross-link involves residue lysine 51. Serine 60 is modified (phosphoserine). Lysine 70 carries the post-translational modification N6-acetyllysine. Residues tyrosine 84 and tyrosine 106 each carry the 3'-nitrotyrosine modification. N6-acetyllysine is present on lysine 117. Phosphoserine is present on residues serine 186 and serine 232.

The protein belongs to the 14-3-3 family. Homodimer. Interacts with SAMSN1 and PRKCE. Interacts with AKAP13. Interacts with SSH1 and TORC2/CRTC2. Interacts with ABL1; the interaction results in cytoplasmic location of ABL1 and inhibition of cABL-mediated apoptosis. Interacts with ROR2 (dimer); the interaction results in phosphorylation of YWHAB on tyrosine residues. Interacts with GAB2. Interacts with YAP1 (phosphorylated form). Interacts with the phosphorylated (by AKT1) form of SRPK2. Interacts with PKA-phosphorylated AANAT. Interacts with MYO1C. Interacts with SIRT2. Interacts with the 'Thr-369' phosphorylated form of DAPK2. Interacts with PI4KB, TBC1D22A and TBC1D22B. Interacts with the 'Ser-1134' and 'Ser-1161' phosphorylated form of SOS1. Interacts (via phosphorylated form) with YWHAB; this interaction occurs in a protein kinase AKT1-dependent manner. Interacts with SLITRK1. Interacts with SYNPO2 (phosphorylated form); YWHAB competes with ACTN2 for interaction with SYNPO2. Interacts with RIPOR2 (via phosphorylated form); this interaction occurs in a chemokine-dependent manner and does not compete for binding of RIPOR2 with RHOA nor blocks inhibition of RIPOR2-mediated RHOA activity. Interacts with MARK2 and MARK3. Interacts with TESK1; the interaction is dependent on the phosphorylation of TESK1 'Ser-439' and inhibits TESK1 kinase activity. Interacts with MEFV. Interacts with HDAC4. Interacts with ADAM22 (via C-terminus). Post-translationally, the alpha, brain-specific form differs from the beta form in being phosphorylated. Phosphorylated on Ser-60 by protein kinase C delta type catalytic subunit in a sphingosine-dependent fashion. Isoform Short contains a N-acetylmethionine at position 1.

It localises to the cytoplasm. Its subcellular location is the melanosome. Adapter protein implicated in the regulation of a large spectrum of both general and specialized signaling pathways. Binds to a large number of partners, usually by recognition of a phosphoserine or phosphothreonine motif. Binding generally results in the modulation of the activity of the binding partner. Negative regulator of osteogenesis. Blocks the nuclear translocation of the phosphorylated form (by AKT1) of SRPK2 and antagonizes its stimulatory effect on cyclin D1 expression resulting in blockage of neuronal apoptosis elicited by SRPK2. Negative regulator of signaling cascades that mediate activation of MAP kinases via AKAP13. The polypeptide is 14-3-3 protein beta/alpha (Ywhab) (Rattus norvegicus (Rat)).